Consider the following 99-residue polypeptide: Putative pterin-4-alpha-carbinolamine dehydratase (99 aa).

It belongs to the pterin-4-alpha-carbinolamine dehydratase family.

It catalyses the reaction (4aS,6R)-4a-hydroxy-L-erythro-5,6,7,8-tetrahydrobiopterin = (6R)-L-erythro-6,7-dihydrobiopterin + H2O. The protein is Putative pterin-4-alpha-carbinolamine dehydratase of Saccharolobus islandicus (strain M.16.27) (Sulfolobus islandicus).